The chain runs to 308 residues: MSTTFSNTLLSDILRQVRPLIGQGKVANYIPALAEVPADNLAIAICTIDGQIFHAGDAEKRFSIQSISKILSLTLAMTRYQEQEIWQRVGQEPSGQPFNSLVQLELEKGKPRNPFVNAGALIVCDMLQSRLSAPKQRMLEVVRKLAGCPDICYDSKVARSEMEHSHRNAAIAYLMKSFGNFDNDVLAVLQTYFHYCALKMNCIELAKCFIYLANQGSTIGSEQQILSPRQARQINALMMTCGMYDGSGEFAFRIGMPGKSGVGGGIVCVVPGEFTVTVWSPELDRSGNSLAGCAALELLADRVGRSVF.

Substrate-binding residues include S66, N117, E161, N168, Y192, Y244, and V262.

Belongs to the glutaminase family. In terms of assembly, homotetramer.

It carries out the reaction L-glutamine + H2O = L-glutamate + NH4(+). The sequence is that of Glutaminase from Photorhabdus laumondii subsp. laumondii (strain DSM 15139 / CIP 105565 / TT01) (Photorhabdus luminescens subsp. laumondii).